Reading from the N-terminus, the 443-residue chain is Signal recognition particle 54 kDa protein (443 aa).

GTP contacts are provided by residues 104–111 (GLQGSGKT), 184–188 (DTAGR), and 242–245 (TKLD).

This sequence belongs to the GTP-binding SRP family. SRP54 subfamily. As to quaternary structure, part of the signal recognition particle protein translocation system, which is composed of SRP and FtsY. Archaeal SRP consists of a 7S RNA molecule of 300 nucleotides and two protein subunits: SRP54 and SRP19.

The protein resides in the cytoplasm. It catalyses the reaction GTP + H2O = GDP + phosphate + H(+). In terms of biological role, involved in targeting and insertion of nascent membrane proteins into the cytoplasmic membrane. Binds to the hydrophobic signal sequence of the ribosome-nascent chain (RNC) as it emerges from the ribosomes. The SRP-RNC complex is then targeted to the cytoplasmic membrane where it interacts with the SRP receptor FtsY. The protein is Signal recognition particle 54 kDa protein of Methanosarcina mazei (strain ATCC BAA-159 / DSM 3647 / Goe1 / Go1 / JCM 11833 / OCM 88) (Methanosarcina frisia).